The following is an 83-amino-acid chain: Large ribosomal subunit protein bL28 (83 aa).

The protein belongs to the bacterial ribosomal protein bL28 family.

The chain is Large ribosomal subunit protein bL28 from Amoebophilus asiaticus (strain 5a2).